The following is a 113-amino-acid chain: MTAPSVSAISAYRQLLRATRIAFKDDYRILLAARSEARKQFNAHKRTAVDTPMQIQHALETASILRHNIVQGIRDAEKEDAKWELRIHDEIERGDNDSVKIGGKNVKIEKACS.

The protein belongs to the complex I LYR family. MZM1 subfamily. Interacts with RIP1.

It localises to the mitochondrion matrix. Assembly factor required for Rieske Fe-S protein RIP1 incorporation into the cytochrome b-c1 (CIII) complex. Functions as a chaperone, binding to this subunit within the mitochondrial matrix and stabilizing it prior to its translocation and insertion into the late CIII dimeric intermediate within the mitochondrial inner membrane. Modulates the mitochondrial matrix zinc pool. The polypeptide is Mitochondrial zinc maintenance protein 1, mitochondrial (MZM1) (Talaromyces marneffei (strain ATCC 18224 / CBS 334.59 / QM 7333) (Penicillium marneffei)).